A 635-amino-acid polypeptide reads, in one-letter code: BTB/POZ domain and ankyrin repeat-containing protein NPR2 (635 aa).

Positions 97–191 (SDADVDVADG…LYTGKLRPAP (95 aa)) constitute a BTB domain. Over residues 138 to 152 (AAGGGGGGGGGGGER) the composition is skewed to gly residues. Residues 138 to 157 (AAGGGGGGGGGGGERTGGRP) are disordered. A C2HC NPR-type zinc finger spans residues 194 to 208 (VVSCADPMCPHDSCP). The Zn(2+) site is built by C197, C202, H204, and C207. 3 ANK repeats span residues 317–347 (KRVRRIHRALDSDDVELVKLLLNESEITLDD), 349–376 (NALHYAAAYCDSKVVSELLDLRLANLNL), and 380–409 (RGYTALHLAAMRREPAIIMCLLNKGAAVSQ). A salicylic acid-binding core (SBC) region spans residues 439–576 (ESNKDRLCID…FLEDDLPDSP (138 aa)). Position 484 (R484) interacts with salicylate.

This sequence belongs to the plant 'ANKYRIN-BTB/POZ' family. 'NPR1-like' subfamily. In terms of assembly, interacts with NRR. Interacts with TGAL1 and TGAL11.

Its subcellular location is the nucleus. It functions in the pathway protein modification; protein ubiquitination. Functionally, salicylic acid (SA)-binding substrate-specific adapter of an E3 ubiquitin-protein ligase complex (CUL3-RBX1-BTB) which mediates the ubiquitination and subsequent proteasomal degradation of target proteins. May be involved in regulating basal defense responses against pathogens, and may be involved in crosstalk between SA- and JA-dependent signaling pathways. Does not seem to be involved in defense response against the bacterial blight disease caused by Xanthomonas oryzae pv. oryzae (Xoo). Over-expression of NPR2/NH2 does not confer disease resistance to Xoo. The sequence is that of BTB/POZ domain and ankyrin repeat-containing protein NPR2 from Oryza sativa subsp. japonica (Rice).